The chain runs to 300 residues: N-acetylmuramic acid 6-phosphate etherase (300 aa).

Positions 57-220 (IAVAFQCGGR…TTGAMIRTGK (164 aa)) constitute an SIS domain. E85 acts as the Proton donor in catalysis. The active site involves E116.

It belongs to the GCKR-like family. MurNAc-6-P etherase subfamily. In terms of assembly, homodimer.

The catalysed reaction is N-acetyl-D-muramate 6-phosphate + H2O = N-acetyl-D-glucosamine 6-phosphate + (R)-lactate. The protein operates within amino-sugar metabolism; 1,6-anhydro-N-acetylmuramate degradation. It participates in amino-sugar metabolism; N-acetylmuramate degradation. It functions in the pathway cell wall biogenesis; peptidoglycan recycling. Specifically catalyzes the cleavage of the D-lactyl ether substituent of MurNAc 6-phosphate, producing GlcNAc 6-phosphate and D-lactate. Together with AnmK, is also required for the utilization of anhydro-N-acetylmuramic acid (anhMurNAc) either imported from the medium or derived from its own cell wall murein, and thus plays a role in cell wall recycling. The polypeptide is N-acetylmuramic acid 6-phosphate etherase (Aliivibrio salmonicida (strain LFI1238) (Vibrio salmonicida (strain LFI1238))).